The primary structure comprises 848 residues: MLQPYRKMLIFAVVTVAFAMAVWSTPVPATPSGVGNATWANNSFNITRYDKITMGQVYSNTSNSPIFFVVISERNFRIVNTPLGASVFWIPKGAMNPPQHQPCVANGPEPGDPRGPCVNSTVSLLFNENVEPFLMSKNLLEFEVLPDTYITGWTFERSKTATTKSNPVGVVLSPPRGSPSANTTIRDDGGPKKPLSIIDEYTTLVADLQNFTMTLTYISPFAAVWPIEAFQTGITVMGCDTTQVVAYLGHGFMGLQISSVNNPPLEMIVVPNDVSARILNRRPSRLRLEPPGPHAGPIYKVYVLSDGNFYLGHGMSRISREVAAYPEESLDYRYHLSLANLDTLAMLAELSSGKSTDVSYYMYRIVARLAVATFSLAEVIRLSDYMLLQEAIDVDMNLRLIVPLVMKYAAGGAADSSYTSSDVAMDQFDVAQSQIEKIVSDINVEAELRKPMYEHRSLLRSVYAYSRKPLPNAVALADRLILAMYKEAIKDRITWNSTMREVLFFAVGAAAGSHVILTDEPEPGAPAHKDASLFLSLNRNILLLCTAMCTASHAVSAGLKLEEVMAGLVAGGVQFSLLEVFSPCMASTRFDLAEEEHVLDLLSVIPPRLYTDLNTGFEDDGTTIHSYGRSANGILNSRIAYNFDAVSVFTPELASCSTKLPKVLVVLPIFTNRSYVITRTAPSIGLTYSLDGVNIAKPIVISYITYGNCEVSRATIKSGYLDNPGHTQTCVYCGSVFMRYMVSGAIMDLIYIDDKEVELQLVAGENSTIPAFNPKLYTPSMNALLMFPNGTVTLMSAFASYSSFKVPSTYLWASIGGLLLAILILYIIIKMLCGGVTNDGYKLLLSYE.

The first 24 residues, 1 to 24 (MLQPYRKMLIFAVVTVAFAMAVWS), serve as a signal peptide directing secretion. Residues 25–808 (TPVPATPSGV…ASYSSFKVPS (784 aa)) are Virion surface-facing. N-linked (GlcNAc...) asparagine; by host glycans are attached at residues asparagine 36, asparagine 41, asparagine 45, asparagine 60, asparagine 119, asparagine 182, and asparagine 210. Residues 166–191 (NPVGVVLSPPRGSPSANTTIRDDGGP) are disordered. Residues 240–303 (DTTQVVAYLG…HAGPIYKVYV (64 aa)) are interaction with gL. Residues asparagine 496, asparagine 672, asparagine 766, and asparagine 789 are each glycosylated (N-linked (GlcNAc...) asparagine; by host). Residues 809 to 829 (TYLWASIGGLLLAILILYIII) form a helical membrane-spanning segment. At 830–848 (KMLCGGVTNDGYKLLLSYE) the chain is on the intravirion side.

The protein belongs to the herpesviridae glycoprotein H family. In terms of assembly, interacts with glycoprotein L (gL); this interaction is necessary for the correct processing and cell surface expression of gH. The heterodimer gH/gL seems to interact with gB trimers during fusion. Post-translationally, N-glycosylated, O-glycosylated, and sialylated.

It is found in the virion membrane. Its subcellular location is the host cell membrane. The protein localises to the host endosome membrane. Functionally, the heterodimer glycoprotein H-glycoprotein L is required for the fusion of viral and plasma membranes leading to virus entry into the host cell. Following initial binding to host receptor, membrane fusion is mediated by the fusion machinery composed of gB and the heterodimer gH/gL. May also be involved in the fusion between the virion envelope and the outer nuclear membrane during virion morphogenesis. In Equus caballus (Horse), this protein is Envelope glycoprotein H.